The chain runs to 353 residues: Tetrahedral aminopeptidase (353 aa).

Residues His68 and Asp182 each coordinate Zn(2+). Residue Glu212 is the Proton acceptor of the active site. Zn(2+) is bound by residues Glu213, Asp235, and His323.

The protein belongs to the peptidase M42 family. As to quaternary structure, homododecamer. The assembly of six dimers results in a tetrahedral-shaped structure; all 12 active sites are located on the inside of the tetrahedron. Substrate access is granted by four pores with a maximal diameter of 18 Angstroms, allowing only small peptides and unfolded proteins access to the active site. Beside the four entry ports, TET contains 12 small product release openings, which are large enough to allow passage of only single amino acid residues. It depends on Zn(2+) as a cofactor. Co(2+) is required as a cofactor.

Its activity is regulated as follows. Inhibited by EDTA and bestatin in vitro. Is insensitive to papain, antipain, chymostatin, leupeptin, pepstatin and aprotinin. Functions as an aminopeptidase, with a clear preference for leucine as the N-terminal amino acid. However, can also cleave moderately long polypeptide substrates of various compositions in a fairly unspecific manner. Has neither carboxypeptidase nor endoproteolytic activities, and it is devoid of N-terminal deblocking activity. Is involved in protein degradation, performing degradation of oligopeptides produced by the proteasome into single amino acids. This chain is Tetrahedral aminopeptidase (frvX), found in Pyrococcus horikoshii (strain ATCC 700860 / DSM 12428 / JCM 9974 / NBRC 100139 / OT-3).